The sequence spans 475 residues: Ribulose bisphosphate carboxylase large chain (475 aa).

The propeptide occupies 1–2 (MS). P3 carries the post-translational modification N-acetylproline. The substrate site is built by T65, N123, and T173. Catalysis depends on K175, which acts as the Proton acceptor. Residue K177 participates in substrate binding. Residues K201, D203, and E204 each contribute to the Mg(2+) site. K201 carries the post-translational modification N6-carboxylysine. Substrate-binding residues include E204, H294, R295, H327, K334, S379, G381, G403, and G404. The active-site Proton acceptor is the H294.

Belongs to the RuBisCO large chain family. Type I subfamily. In terms of assembly, heterohexadecamer of 8 large chains and 8 small chains. It depends on Mg(2+) as a cofactor. In terms of processing, the disulfide bond which can form between Cys-247 in the large chain dimeric partners within the hexadecamer appears to be associated with oxidative stress and protein turnover. The disulfide bonds reported in 1RBO may be the result of oxidation during crystallization.

Its subcellular location is the plastid. It is found in the chloroplast. It carries out the reaction 2 (2R)-3-phosphoglycerate + 2 H(+) = D-ribulose 1,5-bisphosphate + CO2 + H2O. The catalysed reaction is D-ribulose 1,5-bisphosphate + O2 = 2-phosphoglycolate + (2R)-3-phosphoglycerate + 2 H(+). Its activity is regulated as follows. Abscisic acid (ABA) causes weak inhibition of RuBisCO catalytic activity, but more potent inhibition of RuBisCO activation. Functionally, ruBisCO catalyzes two reactions: the carboxylation of D-ribulose 1,5-bisphosphate, the primary event in carbon dioxide fixation, as well as the oxidative fragmentation of the pentose substrate in the photorespiration process. Both reactions occur simultaneously and in competition at the same active site. Binds to abscisic acid (ABA) which has weakly inhibits carboxylation and more strongly inhibits enzyme activation. The polypeptide is Ribulose bisphosphate carboxylase large chain (Spinacia oleracea (Spinach)).